The primary structure comprises 339 residues: D-erythrose-4-phosphate dehydrogenase (339 aa).

NAD(+) contacts are provided by residues 12 to 13 and R81; that span reads RI. Residues 154–156, R200, 213–214, and R236 each bind substrate; these read SCT and TK. The Nucleophile role is filled by C155. N318 provides a ligand contact to NAD(+).

The protein belongs to the glyceraldehyde-3-phosphate dehydrogenase family. Epd subfamily. Homotetramer.

It is found in the cytoplasm. It carries out the reaction D-erythrose 4-phosphate + NAD(+) + H2O = 4-phospho-D-erythronate + NADH + 2 H(+). It functions in the pathway cofactor biosynthesis; pyridoxine 5'-phosphate biosynthesis; pyridoxine 5'-phosphate from D-erythrose 4-phosphate: step 1/5. Catalyzes the NAD-dependent conversion of D-erythrose 4-phosphate to 4-phosphoerythronate. The polypeptide is D-erythrose-4-phosphate dehydrogenase (Escherichia coli (strain UTI89 / UPEC)).